Here is a 386-residue protein sequence, read N- to C-terminus: Patatin-T5 (386 aa).

An N-terminal signal peptide occupies residues 1 to 23 (MATTNSFTILIFMILATTSSTFA). Positions 32-229 (LSIDGGGIKG…TVDDPALLSI (198 aa)) constitute a PNPLA domain. Positions 36 to 41 (GGGIKG) match the GXGXXG motif. An N-linked (GlcNAc...) asparagine glycan is attached at N60. The short motif at 75–79 (GTSTG) is the GXSXG element. The active-site Nucleophile is the S77. N-linked (GlcNAc...) asparagine glycans are attached at residues N90 and N202. The active-site Proton acceptor is the D215. The short motif at 215 to 217 (DGA) is the DGA/G element.

This sequence belongs to the patatin family. N-glycosylated. In terms of tissue distribution, tuber and stolon.

It localises to the vacuole. Functionally, probable lipolytic acyl hydrolase (LAH), an activity which is thought to be involved in the response of tubers to pathogens. In Solanum tuberosum (Potato), this protein is Patatin-T5.